A 1282-amino-acid chain; its full sequence is Clustered mitochondria protein homolog (1282 aa).

Residues 1-43 form a disordered region; that stretch reads MEQNNGTTEHPKEVLDQTNPSNEVTGVPNGNHAEGEGDQNAGE. One can recognise a Clu domain in the interval 341 to 585; sequence DITRPQENYL…RITPLDVLWY (245 aa). Basic and acidic residues-rich tracts occupy residues 631–641 and 653–669; these read EAEEKAEESKP and ESEK…RVDI. Disordered regions lie at residues 631-669 and 892-936; these read EAEE…RVDI and RSQL…PAPA. Residues 924-936 are compositionally biased toward low complexity; the sequence is QASPRPAQSPAPA. The TPR repeat unit spans residues 1003-1036; that stretch reads AKLYHQLSMLYYQSDDKDAAVELARKAVIVTERT. A disordered region spans residues 1202-1282; it reads ANLPTRLGTK…SKQSTVKPSS (81 aa). The segment covering 1212–1223 has biased composition (polar residues); sequence PQPQVGQTTSEM. Residues 1257–1272 show a composition bias toward basic residues; it reads TKQKKRAAARNPKLRG. Positions 1273 to 1282 are enriched in polar residues; sequence SKQSTVKPSS.

The protein belongs to the CLU family. In terms of assembly, may associate with the eukaryotic translation initiation factor 3 (eIF-3) complex.

It localises to the cytoplasm. MRNA-binding protein involved in proper cytoplasmic distribution of mitochondria. In Coccidioides immitis (strain RS) (Valley fever fungus), this protein is Clustered mitochondria protein homolog.